Here is a 218-residue protein sequence, read N- to C-terminus: uncharacterized protein (218 aa).

7 helical membrane-spanning segments follow: residues 9-29, 42-62, 67-87, 107-127, 134-154, 159-179, and 192-212; these read LLVI…VIAM, AIIL…SAAV, IPFL…QLLI, TIVL…AGAS, VVIG…LIHI, IPLL…EMIV, and GTVE…ASIY.

Belongs to the TerC family.

It localises to the cell membrane. This is an uncharacterized protein from Bacillus subtilis (strain 168).